The following is a 208-amino-acid chain: Outer-membrane lipoprotein carrier protein (208 aa).

A signal peptide spans 1-21; the sequence is MKRTATLLVVALILALNTAQA.

This sequence belongs to the LolA family. As to quaternary structure, monomer.

The protein localises to the periplasm. In terms of biological role, participates in the translocation of lipoproteins from the inner membrane to the outer membrane. Only forms a complex with a lipoprotein if the residue after the N-terminal Cys is not an aspartate (The Asp acts as a targeting signal to indicate that the lipoprotein should stay in the inner membrane). In Halorhodospira halophila (strain DSM 244 / SL1) (Ectothiorhodospira halophila (strain DSM 244 / SL1)), this protein is Outer-membrane lipoprotein carrier protein.